The primary structure comprises 289 residues: tRNA pseudouridine synthase B (289 aa).

Asp38 (nucleophile) is an active-site residue.

Belongs to the pseudouridine synthase TruB family. Type 1 subfamily.

The enzyme catalyses uridine(55) in tRNA = pseudouridine(55) in tRNA. Its function is as follows. Responsible for synthesis of pseudouridine from uracil-55 in the psi GC loop of transfer RNAs. The sequence is that of tRNA pseudouridine synthase B from Clostridium acetobutylicum (strain ATCC 824 / DSM 792 / JCM 1419 / IAM 19013 / LMG 5710 / NBRC 13948 / NRRL B-527 / VKM B-1787 / 2291 / W).